The sequence spans 69 residues: DNA-directed RNA polymerase subunit omega (69 aa).

Belongs to the RNA polymerase subunit omega family. As to quaternary structure, the RNAP catalytic core consists of 2 alpha, 1 beta, 1 beta' and 1 omega subunit. When a sigma factor is associated with the core the holoenzyme is formed, which can initiate transcription.

The catalysed reaction is RNA(n) + a ribonucleoside 5'-triphosphate = RNA(n+1) + diphosphate. In terms of biological role, promotes RNA polymerase assembly. Latches the N- and C-terminal regions of the beta' subunit thereby facilitating its interaction with the beta and alpha subunits. This chain is DNA-directed RNA polymerase subunit omega, found in Pelotomaculum thermopropionicum (strain DSM 13744 / JCM 10971 / SI).